Here is a 45-residue protein sequence, read N- to C-terminus: Non-specific lipid-transfer protein (45 aa).

This sequence belongs to the plant LTP family. Expressed in pollen.

Plant non-specific lipid-transfer proteins transfer phospholipids as well as galactolipids across membranes. May play a role in wax or cutin deposition in the cell walls of expanding epidermal cells and certain secretory tissues. This chain is Non-specific lipid-transfer protein, found in Broussonetia papyrifera (Paper mulberry).